The sequence spans 372 residues: MFQFEIQATCSNTGARCGCFHTPHGPVTTPRFMPVGTLGTVKGVTTSQLAETGAQMVLSNTYHLHLQPGEEIVADAGGLHRFMGWDGPMLTDSGGFQVFSLGDLNRIDDEGVDFRNPRNGSRILLTPERSMQIQMRLGADVAMAFDQCPPYPATENDVAEACRRTHAWLGRCADAHQRDDQALFGIVQGGCFPHLRDLSARTVASFNLPGIAIGGVSVGEPVEEMHQIVRQVTPLLPADRPRYLMGIGTLREMAVAVANGIDMFDCVLPTRLGRHGTALVGGERWNLRNARFRHDHTPLDPNCPCIACRQHTRAYLHHLIRSEELLGLTLLSIHNLTHLIRFTTAMGQAIRDGCFSEDFAPWEPSSRAHHTW.

Residue Asp-92 is the Proton acceptor of the active site. Residues 92 to 96 (DSGGF), Asp-146, Gln-188, and Gly-215 each bind substrate. An RNA binding region spans residues 246 to 252 (GIGTLRE). Asp-265 acts as the Nucleophile in catalysis. Residues 270 to 274 (TRLGR) form an RNA binding; important for wobble base 34 recognition region. Cys-303, Cys-305, Cys-308, and His-334 together coordinate Zn(2+).

Belongs to the queuine tRNA-ribosyltransferase family. As to quaternary structure, homodimer. Within each dimer, one monomer is responsible for RNA recognition and catalysis, while the other monomer binds to the replacement base PreQ1. The cofactor is Zn(2+).

It catalyses the reaction 7-aminomethyl-7-carbaguanine + guanosine(34) in tRNA = 7-aminomethyl-7-carbaguanosine(34) in tRNA + guanine. Its pathway is tRNA modification; tRNA-queuosine biosynthesis. In terms of biological role, catalyzes the base-exchange of a guanine (G) residue with the queuine precursor 7-aminomethyl-7-deazaguanine (PreQ1) at position 34 (anticodon wobble position) in tRNAs with GU(N) anticodons (tRNA-Asp, -Asn, -His and -Tyr). Catalysis occurs through a double-displacement mechanism. The nucleophile active site attacks the C1' of nucleotide 34 to detach the guanine base from the RNA, forming a covalent enzyme-RNA intermediate. The proton acceptor active site deprotonates the incoming PreQ1, allowing a nucleophilic attack on the C1' of the ribose to form the product. After dissociation, two additional enzymatic reactions on the tRNA convert PreQ1 to queuine (Q), resulting in the hypermodified nucleoside queuosine (7-(((4,5-cis-dihydroxy-2-cyclopenten-1-yl)amino)methyl)-7-deazaguanosine). In Synechococcus sp. (strain CC9311), this protein is Queuine tRNA-ribosyltransferase.